The chain runs to 239 residues: Superoxide dismutase [Mn] 3 (239 aa).

Residues alanine 1–threonine 19 are compositionally biased toward polar residues. A disordered region spans residues alanine 1–proline 20. An N-terminal signal peptide occupies residues alanine 1 to alanine 30. Mn(2+)-binding residues include histidine 57, histidine 112, aspartate 195, and histidine 199.

It belongs to the iron/manganese superoxide dismutase family. Homodimer. Requires Mn(2+) as cofactor.

The catalysed reaction is 2 superoxide + 2 H(+) = H2O2 + O2. Its function is as follows. Destroys superoxide anion radicals which are normally produced within the cells and which are toxic to biological systems. The protein is Superoxide dismutase [Mn] 3 (sodA3) of Leptolyngbya boryana (Plectonema boryanum).